Consider the following 300-residue polypeptide: UDP-N-acetylenolpyruvoylglucosamine reductase (300 aa).

The 163-residue stretch at 28–190 (KIGGRVKYLV…TRAMMSFKKE (163 aa)) folds into the FAD-binding PCMH-type domain. Arg169 is a catalytic residue. Ser219 serves as the catalytic Proton donor. The active site involves Glu290.

The protein belongs to the MurB family. Requires FAD as cofactor.

The protein localises to the cytoplasm. The catalysed reaction is UDP-N-acetyl-alpha-D-muramate + NADP(+) = UDP-N-acetyl-3-O-(1-carboxyvinyl)-alpha-D-glucosamine + NADPH + H(+). The protein operates within cell wall biogenesis; peptidoglycan biosynthesis. Cell wall formation. This Thermotoga sp. (strain RQ2) protein is UDP-N-acetylenolpyruvoylglucosamine reductase.